A 129-amino-acid chain; its full sequence is Phosphoribosyl-AMP cyclohydrolase (129 aa).

Residue D86 coordinates Mg(2+). C87 is a Zn(2+) binding site. Mg(2+) is bound by residues D88 and D90. Zn(2+)-binding residues include C104 and C111.

It belongs to the PRA-CH family. In terms of assembly, homodimer. Mg(2+) is required as a cofactor. The cofactor is Zn(2+).

It localises to the cytoplasm. The catalysed reaction is 1-(5-phospho-beta-D-ribosyl)-5'-AMP + H2O = 1-(5-phospho-beta-D-ribosyl)-5-[(5-phospho-beta-D-ribosylamino)methylideneamino]imidazole-4-carboxamide. It participates in amino-acid biosynthesis; L-histidine biosynthesis; L-histidine from 5-phospho-alpha-D-ribose 1-diphosphate: step 3/9. In terms of biological role, catalyzes the hydrolysis of the adenine ring of phosphoribosyl-AMP. This Ignicoccus hospitalis (strain KIN4/I / DSM 18386 / JCM 14125) protein is Phosphoribosyl-AMP cyclohydrolase.